We begin with the raw amino-acid sequence, 51 residues long: Sperm protamine P1 (51 aa).

The protein belongs to the protamine P1 family. Testis.

The protein resides in the nucleus. Its subcellular location is the chromosome. In terms of biological role, protamines substitute for histones in the chromatin of sperm during the haploid phase of spermatogenesis. They compact sperm DNA into a highly condensed, stable and inactive complex. This Nasalis larvatus (Proboscis monkey) protein is Sperm protamine P1 (PRM1).